The following is a 262-amino-acid chain: MNNRPIRLLTSGRAGLGAGALITAVVLLIALGAVWTPVAFADGCPDAEVTFARGTGEPPGIGRVGQAFVDSLRQQTGMEIGVYPVNYAASRLQLHGGDGANDAISHIKSMASSCPNTKLVLGGYSQGATVIDIVAGVPLGSISFGSPLPAAYADNVAAVAVFGNPSNRAGGSLSSLSPLFGSKAIDLCNPTDPICHVGPGNEFSGHIDGYIPTYTTQAASFVVQRLRAGSVPHLPGSVPQLPGSVLQMPGTAAPAPESLHGR.

The first 41 residues, 1–41, serve as a signal peptide directing secretion; that stretch reads MNNRPIRLLTSGRAGLGAGALITAVVLLIALGAVWTPVAFA. A disulfide bridge links Cys44 with Cys114. Ser125 acts as the Nucleophile in catalysis. Cys188 and Cys195 are joined by a disulfide. Asp192 is a catalytic residue. His206 acts as the Proton donor/acceptor in catalysis. The tract at residues 241-262 is disordered; the sequence is LPGSVLQMPGTAAPAPESLHGR.

It belongs to the cutinase family.

The protein resides in the secreted. In terms of biological role, shows weak esterase activity with the p-nitrophenol-linked aliphatic ester pNP-butyrate. Does not exhibit cutinase activity. In Mycobacterium tuberculosis (strain ATCC 25618 / H37Rv), this protein is Probable carboxylesterase Culp3 (cut3).